Consider the following 283-residue polypeptide: ATP phosphoribosyltransferase (283 aa).

Belongs to the ATP phosphoribosyltransferase family. Long subfamily. Mg(2+) serves as cofactor.

It is found in the cytoplasm. It catalyses the reaction 1-(5-phospho-beta-D-ribosyl)-ATP + diphosphate = 5-phospho-alpha-D-ribose 1-diphosphate + ATP. The protein operates within amino-acid biosynthesis; L-histidine biosynthesis; L-histidine from 5-phospho-alpha-D-ribose 1-diphosphate: step 1/9. With respect to regulation, feedback inhibited by histidine. Catalyzes the condensation of ATP and 5-phosphoribose 1-diphosphate to form N'-(5'-phosphoribosyl)-ATP (PR-ATP). Has a crucial role in the pathway because the rate of histidine biosynthesis seems to be controlled primarily by regulation of HisG enzymatic activity. This is ATP phosphoribosyltransferase from Parabacteroides distasonis (strain ATCC 8503 / DSM 20701 / CIP 104284 / JCM 5825 / NCTC 11152).